Consider the following 337-residue polypeptide: ATP-dependent 6-phosphofructokinase (337 aa).

An ATP-binding site is contributed by glycine 11. 21–25 (RAVVR) serves as a coordination point for ADP. ATP contacts are provided by residues 72 to 73 (RY) and 102 to 105 (GDGS). Aspartate 103 contributes to the Mg(2+) binding site. 125–127 (TID) contributes to the substrate binding site. The active-site Proton acceptor is aspartate 127. Arginine 154 provides a ligand contact to ADP. Residues arginine 162 and 169–171 (MGR) contribute to the substrate site. Residues 185–187 (GAD), arginine 212, and 214–216 (KNH) each bind ADP. Residues glutamate 223, arginine 245, and 251 to 254 (HILR) each bind substrate.

The protein belongs to the phosphofructokinase type A (PFKA) family. ATP-dependent PFK group I subfamily. Prokaryotic clade 'B1' sub-subfamily. Homotetramer. Mg(2+) serves as cofactor.

Its subcellular location is the cytoplasm. The catalysed reaction is beta-D-fructose 6-phosphate + ATP = beta-D-fructose 1,6-bisphosphate + ADP + H(+). It functions in the pathway carbohydrate degradation; glycolysis; D-glyceraldehyde 3-phosphate and glycerone phosphate from D-glucose: step 3/4. Its activity is regulated as follows. Allosterically activated by ADP and other diphosphonucleosides, and allosterically inhibited by phosphoenolpyruvate. Its function is as follows. Catalyzes the phosphorylation of D-fructose 6-phosphate to fructose 1,6-bisphosphate by ATP, the first committing step of glycolysis. The sequence is that of ATP-dependent 6-phosphofructokinase from Streptococcus equi subsp. zooepidemicus (strain H70).